A 290-amino-acid polypeptide reads, in one-letter code: Light-independent protochlorophyllide reductase iron-sulfur ATP-binding protein (290 aa).

ATP-binding positions include 10-15 and Lys-39; that span reads GIGKST. Residue Ser-14 coordinates Mg(2+). 2 residues coordinate [4Fe-4S] cluster: Cys-95 and Cys-129. ATP is bound at residue 180–181; it reads NR.

This sequence belongs to the NifH/BchL/ChlL family. As to quaternary structure, homodimer. Protochlorophyllide reductase is composed of three subunits; ChlL, ChlN and ChlB. The cofactor is [4Fe-4S] cluster.

Its subcellular location is the plastid. It is found in the chloroplast. The catalysed reaction is chlorophyllide a + oxidized 2[4Fe-4S]-[ferredoxin] + 2 ADP + 2 phosphate = protochlorophyllide a + reduced 2[4Fe-4S]-[ferredoxin] + 2 ATP + 2 H2O. It participates in porphyrin-containing compound metabolism; chlorophyll biosynthesis (light-independent). Component of the dark-operative protochlorophyllide reductase (DPOR) that uses Mg-ATP and reduced ferredoxin to reduce ring D of protochlorophyllide (Pchlide) to form chlorophyllide a (Chlide). This reaction is light-independent. The L component serves as a unique electron donor to the NB-component of the complex, and binds Mg-ATP. This chain is Light-independent protochlorophyllide reductase iron-sulfur ATP-binding protein, found in Porphyra purpurea (Red seaweed).